The chain runs to 172 residues: Large ribosomal subunit protein uL10 (172 aa).

It belongs to the universal ribosomal protein uL10 family. As to quaternary structure, part of the ribosomal stalk of the 50S ribosomal subunit. The N-terminus interacts with L11 and the large rRNA to form the base of the stalk. The C-terminus forms an elongated spine to which L12 dimers bind in a sequential fashion forming a multimeric L10(L12)X complex.

In terms of biological role, forms part of the ribosomal stalk, playing a central role in the interaction of the ribosome with GTP-bound translation factors. The polypeptide is Large ribosomal subunit protein uL10 (Afipia carboxidovorans (strain ATCC 49405 / DSM 1227 / KCTC 32145 / OM5) (Oligotropha carboxidovorans)).